We begin with the raw amino-acid sequence, 526 residues long: Secreted triacylglycerol lipase LIP4 (526 aa).

A signal peptide spans Met-1–Ala-26. Residue Asn-186 is glycosylated (N-linked (GlcNAc...) asparagine). Ser-195 serves as the catalytic Nucleophile. Asn-228 carries an N-linked (GlcNAc...) asparagine glycan. Catalysis depends on residues Asp-342 and His-376. Asn-377 carries N-linked (GlcNAc...) asparagine glycosylation. Residues Thr-412–Arg-526 form a disordered region. Composition is skewed to low complexity over residues Gly-413–Pro-423 and Thr-430–Ala-457. N-linked (GlcNAc...) asparagine glycosylation occurs at Asn-462. The span at Pro-480 to Ser-490 shows a compositional bias: low complexity. Positions Arg-516 to Arg-526 are enriched in pro residues.

The protein belongs to the AB hydrolase superfamily. Lipase family. Class Lip subfamily.

It localises to the secreted. The catalysed reaction is a triacylglycerol + H2O = a diacylglycerol + a fatty acid + H(+). It catalyses the reaction a monoacylglycerol + H2O = glycerol + a fatty acid + H(+). It carries out the reaction a diacylglycerol + H2O = a monoacylglycerol + a fatty acid + H(+). Functionally, secreted lipase that hydrolyzes acylglycerol lipids such as triacylglycerols and consequently releases free fatty acid. Can hydrolyze 4-nitrophenyl palmitate to release 4-nitrophenol and palmitoic acid. Due to an absence of fatty acid synthase genes in Malassezia species, secretory lipases are essential for the yeast to generate free fatty acids from degradation of sebum and assimilate them as lipid sources for growth. Plays important roles not only in lipid metabolism but also in the immune response of host cells and pathogenesis. This Malassezia furfur (Pityriasis versicolor infection agent) protein is Secreted triacylglycerol lipase LIP4.